Reading from the N-terminus, the 183-residue chain is dTTP/UTP pyrophosphatase (183 aa).

Catalysis depends on Asp64, which acts as the Proton acceptor.

Belongs to the Maf family. YhdE subfamily. Requires a divalent metal cation as cofactor.

The protein localises to the cytoplasm. It catalyses the reaction dTTP + H2O = dTMP + diphosphate + H(+). It carries out the reaction UTP + H2O = UMP + diphosphate + H(+). Functionally, nucleoside triphosphate pyrophosphatase that hydrolyzes dTTP and UTP. May have a dual role in cell division arrest and in preventing the incorporation of modified nucleotides into cellular nucleic acids. The chain is dTTP/UTP pyrophosphatase from Acinetobacter baylyi (strain ATCC 33305 / BD413 / ADP1).